A 317-amino-acid polypeptide reads, in one-letter code: uncharacterized protein (317 aa).

The protein to M.avium MAV169.

This is an uncharacterized protein from Mycobacterium tuberculosis (strain CDC 1551 / Oshkosh).